The primary structure comprises 310 residues: Aspartate carbamoyltransferase catalytic subunit 3 (310 aa).

Residues R55 and T56 each contribute to the carbamoyl phosphate site. K85 is a binding site for L-aspartate. Positions 106, 134, and 137 each coordinate carbamoyl phosphate. The L-aspartate site is built by R167 and R228. Residues L266 and P267 each coordinate carbamoyl phosphate.

It belongs to the aspartate/ornithine carbamoyltransferase superfamily. ATCase family. As to quaternary structure, heterododecamer (2C3:3R2) of six catalytic PyrB chains organized as two trimers (C3), and six regulatory PyrI chains organized as three dimers (R2).

It carries out the reaction carbamoyl phosphate + L-aspartate = N-carbamoyl-L-aspartate + phosphate + H(+). Its pathway is pyrimidine metabolism; UMP biosynthesis via de novo pathway; (S)-dihydroorotate from bicarbonate: step 2/3. Its function is as follows. Catalyzes the condensation of carbamoyl phosphate and aspartate to form carbamoyl aspartate and inorganic phosphate, the committed step in the de novo pyrimidine nucleotide biosynthesis pathway. The polypeptide is Aspartate carbamoyltransferase catalytic subunit 3 (Shewanella halifaxensis (strain HAW-EB4)).